We begin with the raw amino-acid sequence, 233 residues long: MSKKITKNRQKINELIKDVENKIYSLDEAIEMAKKTSFVKFDASIDISLKLNLDTRKADQQLRGSVSLPNGTGKIIRVLATSDEKEQLDLAKKAGANIVANKSDLEEILKSEKFDFDIMVTDPKMMPTLGKYGKVLGPKGLMPNPKTGTVTPNIAKAVEEIKKGKANYRADKGGIINSSIGKVSMGTTSLVENAKVLIDTIRKLKPATVKGIYMQNLTISTTMGPSFKIKIEN.

The protein belongs to the universal ribosomal protein uL1 family. As to quaternary structure, part of the 50S ribosomal subunit.

In terms of biological role, binds directly to 23S rRNA. The L1 stalk is quite mobile in the ribosome, and is involved in E site tRNA release. Its function is as follows. Protein L1 is also a translational repressor protein, it controls the translation of the L11 operon by binding to its mRNA. The sequence is that of Large ribosomal subunit protein uL1 from Mycoplasma mobile (strain ATCC 43663 / 163K / NCTC 11711) (Mesomycoplasma mobile).